The primary structure comprises 1699 residues: Eukaryotic translation initiation factor 2-alpha kinase gcn-2 (1699 aa).

In terms of domain architecture, RWD spans glutamate 22–histidine 138. Protein kinase domains lie at leucine 108–leucine 507 and valine 508–leucine 999. Residues methionine 114–valine 122, lysine 154, leucine 497–valine 505, and lysine 520 each bind ATP. Disordered stretches follow at residues aspartate 572 to proline 615 and lysine 632 to glutamate 725. The segment covering serine 669–glycine 706 has biased composition (acidic residues). Polar residues predominate over residues glutamine 711–alanine 720. Aspartate 829 (proton acceptor) is an active-site residue.

The protein belongs to the protein kinase superfamily. Ser/Thr protein kinase family. GCN2 subfamily.

The enzyme catalyses L-seryl-[protein] + ATP = O-phospho-L-seryl-[protein] + ADP + H(+). It catalyses the reaction L-threonyl-[protein] + ATP = O-phospho-L-threonyl-[protein] + ADP + H(+). Functionally, serine/threonine-protein kinase which phosphorylates the alpha subunit of eukaryotic translation-initiation factor 2 (eIF2alpha), leading to its inactivation and thus to a rapid reduction of translational initiation and repression of global protein synthesis. Involved in the unfolded protein response (UPR) triggered by several stresses including mitochondrial, osmotic and oxidative stresses, amino acid deprivation and UV irradiation, probably by phosphorylating and inhibiting eIF2alpha. In addition, leads to the selective translation/transcription of some mRNA including atf-5, pha-4 and gpdh-1 which are part of the UPR. Required for maintaining lifespan during amino acid starvation. Involved in hypoxia-mediated adaptive protective response. The polypeptide is Eukaryotic translation initiation factor 2-alpha kinase gcn-2 (Caenorhabditis elegans).